A 712-amino-acid polypeptide reads, in one-letter code: MFPHEEKLIRERLGREPNELEWAMLEVMWSEHASYKSSRPWLKLLPTENEHVILGPGEDAGIVKFDDETWVVVGIESHNHPSAVEPYGGAATGVGGIVRDILCMGARPIALLDPIRFGPLEKERNRYLFEYVVKGIADYGNRIGVPTVGGETEFDESLDSYTLVNVACVGIMRPEHLVHSYVTEAGLKLILVGNRTGRDGVHGVTFASEELSENTEEDRSAVQIPDPFTEKLLIEATLEAVYTGRVKALKDLGGGGLTCAASEMAGKKGFGAVIYADRVPLREPGMTPTEVMISESQERMLFAVKPEDVEEIGRIFEEYELEWTVVGETIEEPRFVVYWKGEKVADLPIELLTEVPTIEWELKPYSAEGPVETPDVPFERAFDLVWGSPNILSKRWVWEQYDHEVQGRTVLKPGRDAAVLKINDEYGLAFVADGNPNHSYLNPYQGAMGAVAEVVRNLVSVGAEPLALVDNLNFASPERPEVYWSFAETVRGLADAARAFGLAYVSGNVSFYNEVVDRPIKPTPVVAGLGKVKLEAIPNGGFEEGLLIGVVGLTKPELGGSELFARLGVEGGLAPRVNLEEEKANANGVLEAIRRGLVRAVHDVSRGGLAVALAKMAVAGNTGFTADLSKVPSETTNPIEVAFSESHGRYIVAFPEENLEELKGLFKHFVIIGRTGGSDAVFLWNGWELLRKPVSELKAVHESLPMLLGEEE.

The active site involves H32. Y35 is a binding site for ATP. E76 serves as a coordination point for Mg(2+). Residues 77 to 80 (SHNH) and R99 contribute to the substrate site. H78 (proton acceptor) is an active-site residue. Residue D100 participates in Mg(2+) binding. Residue Q223 coordinates substrate. D251 serves as a coordination point for Mg(2+). 295-297 (ESQ) contributes to the substrate binding site. ATP contacts are provided by D470 and G507. Residue N508 coordinates Mg(2+). Residue S510 coordinates substrate.

It belongs to the FGAMS family. As to quaternary structure, monomer. Part of the FGAM synthase complex composed of 1 PurL, 1 PurQ and 2 PurS subunits.

It localises to the cytoplasm. It carries out the reaction N(2)-formyl-N(1)-(5-phospho-beta-D-ribosyl)glycinamide + L-glutamine + ATP + H2O = 2-formamido-N(1)-(5-O-phospho-beta-D-ribosyl)acetamidine + L-glutamate + ADP + phosphate + H(+). It functions in the pathway purine metabolism; IMP biosynthesis via de novo pathway; 5-amino-1-(5-phospho-D-ribosyl)imidazole from N(2)-formyl-N(1)-(5-phospho-D-ribosyl)glycinamide: step 1/2. Part of the phosphoribosylformylglycinamidine synthase complex involved in the purines biosynthetic pathway. Catalyzes the ATP-dependent conversion of formylglycinamide ribonucleotide (FGAR) and glutamine to yield formylglycinamidine ribonucleotide (FGAM) and glutamate. The FGAM synthase complex is composed of three subunits. PurQ produces an ammonia molecule by converting glutamine to glutamate. PurL transfers the ammonia molecule to FGAR to form FGAM in an ATP-dependent manner. PurS interacts with PurQ and PurL and is thought to assist in the transfer of the ammonia molecule from PurQ to PurL. This is Phosphoribosylformylglycinamidine synthase subunit PurL from Thermococcus gammatolerans (strain DSM 15229 / JCM 11827 / EJ3).